The following is a 382-amino-acid chain: Intermediate transcription factor 3 large subunit (382 aa).

Belongs to the orthopoxvirus OPG150 family. In terms of assembly, heterodimerizes with protein A8 to form the virus intermediate transcription factor (VITF)-3.

Functionally, acts with RNA polymerase to initiate transcription from intermediate gene promoters. The sequence is that of Intermediate transcription factor 3 large subunit (OPG150) from Homo sapiens (Human).